Consider the following 882-residue polypeptide: DNA mismatch repair protein MutS (882 aa).

635–642 lines the ATP pocket; it reads GPNMGGKS.

The protein belongs to the DNA mismatch repair MutS family.

Its function is as follows. This protein is involved in the repair of mismatches in DNA. It is possible that it carries out the mismatch recognition step. This protein has a weak ATPase activity. The chain is DNA mismatch repair protein MutS from Janthinobacterium sp. (strain Marseille) (Minibacterium massiliensis).